Reading from the N-terminus, the 466-residue chain is Uronate isomerase (466 aa).

It belongs to the metallo-dependent hydrolases superfamily. Uronate isomerase family.

The enzyme catalyses D-glucuronate = D-fructuronate. It catalyses the reaction aldehydo-D-galacturonate = keto-D-tagaturonate. Its pathway is carbohydrate metabolism; pentose and glucuronate interconversion. In Lachnoclostridium phytofermentans (strain ATCC 700394 / DSM 18823 / ISDg) (Clostridium phytofermentans), this protein is Uronate isomerase.